We begin with the raw amino-acid sequence, 909 residues long: Villin-1 (909 aa).

Gelsolin-like repeat units lie at residues 29 to 79 (KQLI…VDSI), 149 to 189 (VRVK…QEKA), 262 to 305 (GNLH…TERK), 391 to 448 (LKVW…QDRA), 529 to 569 (MQAI…SDHE), and 631 to 672 (LKVK…KSKE). Disordered stretches follow at residues 733–781 (SLKG…CSSE) and 816–835 (DGVA…QKPR). Over residues 752–762 (QSKDNASRDLQ) the composition is skewed to basic and acidic residues. Serine 780 is subject to Phosphoserine. An HP domain is found at 844-909 (SLESLAYSYE…NKLKISLHLF (66 aa)).

This sequence belongs to the villin/gelsolin family. In terms of tissue distribution, expressed in all tissues examined. Mainly detected in the vascular tissue and the pericycle of roots and in the vasculature of leaves. Not expressed in the root cap.

The protein localises to the cytoplasm. It is found in the cytoskeleton. In terms of biological role, binds actin and actin filament bundles in a Ca(2+)/calmodulin-insensitive manner, but is unable to sever, cap, and nucleate actin filament formation in vitro. Does not protect individual filaments from severing by VLN3 (AC O81645). The sequence is that of Villin-1 from Arabidopsis thaliana (Mouse-ear cress).